A 130-amino-acid chain; its full sequence is MAKAAAPRIRKKERKNIISGVAHVLSTFNNTMITISDAQGNAIAWSSAGAQGFKGSRKSTPYAAQVAAEDAGRKAREHGMETLEIEVSGPGSGRESALRALQAVGFSITSIRDMTPVPHNGCRPRKRRRV.

Belongs to the universal ribosomal protein uS11 family. Part of the 30S ribosomal subunit. Interacts with proteins S7 and S18. Binds to IF-3.

Functionally, located on the platform of the 30S subunit, it bridges several disparate RNA helices of the 16S rRNA. Forms part of the Shine-Dalgarno cleft in the 70S ribosome. The protein is Small ribosomal subunit protein uS11 of Gluconacetobacter diazotrophicus (strain ATCC 49037 / DSM 5601 / CCUG 37298 / CIP 103539 / LMG 7603 / PAl5).